A 379-amino-acid polypeptide reads, in one-letter code: Protein trichome birefringence-like 36 (379 aa).

A helical; Signal-anchor for type II membrane protein transmembrane segment spans residues 8–24 (VLFLSLCLILGKVVLSQ). A GDS motif motif is present at residues 123–125 (GDS). The DCXHWCLPGXXDXWN motif signature appears at 353 to 367 (DCSHWCLPGVPDIWN).

The protein belongs to the PC-esterase family. TBL subfamily.

Its subcellular location is the membrane. Functionally, may act as a bridging protein that binds pectin and other cell wall polysaccharides. Probably involved in maintaining esterification of pectins. May be involved in the specific O-acetylation of cell wall polymers. The sequence is that of Protein trichome birefringence-like 36 (TBL36) from Arabidopsis thaliana (Mouse-ear cress).